Consider the following 405-residue polypeptide: Imidazolonepropionase (405 aa).

Fe(3+) contacts are provided by His-70 and His-72. The Zn(2+) site is built by His-70 and His-72. 3 residues coordinate 4-imidazolone-5-propanoate: Arg-79, Tyr-142, and His-175. Position 142 (Tyr-142) interacts with N-formimidoyl-L-glutamate. His-240 lines the Fe(3+) pocket. Zn(2+) is bound at residue His-240. Gln-243 contributes to the 4-imidazolone-5-propanoate binding site. Asp-315 provides a ligand contact to Fe(3+). Asp-315 contacts Zn(2+). Residues Asn-317 and Gly-319 each coordinate N-formimidoyl-L-glutamate. Thr-320 contributes to the 4-imidazolone-5-propanoate binding site.

This sequence belongs to the metallo-dependent hydrolases superfamily. HutI family. Zn(2+) serves as cofactor. Fe(3+) is required as a cofactor.

It is found in the cytoplasm. It carries out the reaction 4-imidazolone-5-propanoate + H2O = N-formimidoyl-L-glutamate. It functions in the pathway amino-acid degradation; L-histidine degradation into L-glutamate; N-formimidoyl-L-glutamate from L-histidine: step 3/3. Functionally, catalyzes the hydrolytic cleavage of the carbon-nitrogen bond in imidazolone-5-propanoate to yield N-formimidoyl-L-glutamate. It is the third step in the universal histidine degradation pathway. This is Imidazolonepropionase from Ectopseudomonas mendocina (strain ymp) (Pseudomonas mendocina).